The following is a 203-amino-acid chain: Ribosome maturation factor RimP (203 aa).

The interval 184-203 is disordered; the sequence is RRGSAPVEDEEGEGEAPTAH.

The protein belongs to the RimP family.

It localises to the cytoplasm. In terms of biological role, required for maturation of 30S ribosomal subunits. This Methylobacterium nodulans (strain LMG 21967 / CNCM I-2342 / ORS 2060) protein is Ribosome maturation factor RimP.